The chain runs to 247 residues: Carboxy-S-adenosyl-L-methionine synthase (247 aa).

S-adenosyl-L-methionine is bound by residues Tyr-40, 65-67 (GAS), 90-91 (DN), 122-123 (DI), Asn-137, and Arg-204.

Belongs to the class I-like SAM-binding methyltransferase superfamily. Cx-SAM synthase family. In terms of assembly, homodimer.

It carries out the reaction prephenate + S-adenosyl-L-methionine = carboxy-S-adenosyl-L-methionine + 3-phenylpyruvate + H2O. Functionally, catalyzes the conversion of S-adenosyl-L-methionine (SAM) to carboxy-S-adenosyl-L-methionine (Cx-SAM). This Pseudomonas putida (strain GB-1) protein is Carboxy-S-adenosyl-L-methionine synthase.